Consider the following 199-residue polypeptide: Protein GrpE (199 aa).

Residues 1-24 are compositionally biased toward basic and acidic residues; that stretch reads MSKQNKKDWKKFRDEHKEEHKVEN. Residues 1–52 are disordered; the sequence is MSKQNKKDWKKFRDEHKEEHKVENEILEEETDEESQHQEPALGHPSYTALEE.

The protein belongs to the GrpE family. In terms of assembly, homodimer.

It localises to the cytoplasm. Its function is as follows. Participates actively in the response to hyperosmotic and heat shock by preventing the aggregation of stress-denatured proteins, in association with DnaK and GrpE. It is the nucleotide exchange factor for DnaK and may function as a thermosensor. Unfolded proteins bind initially to DnaJ; upon interaction with the DnaJ-bound protein, DnaK hydrolyzes its bound ATP, resulting in the formation of a stable complex. GrpE releases ADP from DnaK; ATP binding to DnaK triggers the release of the substrate protein, thus completing the reaction cycle. Several rounds of ATP-dependent interactions between DnaJ, DnaK and GrpE are required for fully efficient folding. This Legionella pneumophila (strain Lens) protein is Protein GrpE.